A 354-amino-acid chain; its full sequence is 3-isopropylmalate dehydrogenase (354 aa).

73-86 (GPAYDKLDRPLRPE) contacts NAD(+). Residues Arg93, Arg103, Arg131, and Asp221 each contribute to the substrate site. 3 residues coordinate Mg(2+): Asp221, Asp245, and Asp249. Residue 279 to 291 (GSAPDIAGQNLAN) participates in NAD(+) binding.

This sequence belongs to the isocitrate and isopropylmalate dehydrogenases family. LeuB type 1 subfamily. In terms of assembly, homodimer. The cofactor is Mg(2+). Mn(2+) is required as a cofactor.

The protein resides in the cytoplasm. It carries out the reaction (2R,3S)-3-isopropylmalate + NAD(+) = 4-methyl-2-oxopentanoate + CO2 + NADH. It participates in amino-acid biosynthesis; L-leucine biosynthesis; L-leucine from 3-methyl-2-oxobutanoate: step 3/4. Functionally, catalyzes the oxidation of 3-carboxy-2-hydroxy-4-methylpentanoate (3-isopropylmalate) to 3-carboxy-4-methyl-2-oxopentanoate. The product decarboxylates to 4-methyl-2 oxopentanoate. The chain is 3-isopropylmalate dehydrogenase from Chromobacterium violaceum (strain ATCC 12472 / DSM 30191 / JCM 1249 / CCUG 213 / NBRC 12614 / NCIMB 9131 / NCTC 9757 / MK).